The following is an 89-amino-acid chain: Small ribosomal subunit protein uS15 (89 aa).

This sequence belongs to the universal ribosomal protein uS15 family. Part of the 30S ribosomal subunit. Forms a bridge to the 50S subunit in the 70S ribosome, contacting the 23S rRNA.

One of the primary rRNA binding proteins, it binds directly to 16S rRNA where it helps nucleate assembly of the platform of the 30S subunit by binding and bridging several RNA helices of the 16S rRNA. Functionally, forms an intersubunit bridge (bridge B4) with the 23S rRNA of the 50S subunit in the ribosome. The chain is Small ribosomal subunit protein uS15 from Enterobacter sp. (strain 638).